Here is a 411-residue protein sequence, read N- to C-terminus: MSQSKGTVVLAYSGGLDTSCILVWLKEQGFDVIAYLANIGQNEDFEEARKKAVNLGAKKVYIEDIRQQFVEEYIWPAVQANAIYEDRYLLGTSLARPCIAKKQVEIAKKEAAEYVSHGATGKGNDQIRFELTCYSLYPEVKIIAPWRMPEFYNRFRGRSDLMEYAKKHNISVPVTPKSPWSMDENLMHISYEGGILENPKNHAPPGLYLKTKDPATSPDEPDILEIEFKKGVPVKVTNTKNKTQHSSSLALFCYLNEVAGKHGVGRIDIVENRFIGMKSRGIYETPAGTILYQAHLDIEAFTMDREMRKIKQQLSQRFAEQIYNGFWYSPECEFVRSCISKSQEMVEGKVLVSVLKGQVYVLGREAPHSLYNEELVSMDVQGDYDPADACGFIKINAVRLKEYHRLQKNKK.

Residues 11 to 19 (AYSGGLDTS) and Ala37 each bind ATP. Positions 88 and 93 each coordinate L-citrulline. 116 to 124 (SHGATGKGN) contacts ATP. Positions 120, 124, and 125 each coordinate L-aspartate. Residue Asn124 coordinates L-citrulline. L-citrulline contacts are provided by Arg128, Ser181, Ser190, Glu271, and Tyr283.

This sequence belongs to the argininosuccinate synthase family. Homotetramer.

Its subcellular location is the cytoplasm. The protein localises to the cytosol. It carries out the reaction L-citrulline + L-aspartate + ATP = 2-(N(omega)-L-arginino)succinate + AMP + diphosphate + H(+). It functions in the pathway amino-acid biosynthesis; L-arginine biosynthesis; L-arginine from L-ornithine and carbamoyl phosphate: step 2/3. The protein operates within nitrogen metabolism; urea cycle; (N(omega)-L-arginino)succinate from L-aspartate and L-citrulline: step 1/1. Its function is as follows. One of the enzymes of the urea cycle, the metabolic pathway transforming neurotoxic amonia produced by protein catabolism into inocuous urea in the liver of ureotelic animals. Catalyzes the formation of arginosuccinate from aspartate, citrulline and ATP and together with ASL it is responsible for the biosynthesis of arginine in most body tissues. The sequence is that of Argininosuccinate synthase from Xenopus laevis (African clawed frog).